A 472-amino-acid polypeptide reads, in one-letter code: Siroheme synthase (472 aa).

Positions 1-207 (MNFLPIFLDI…GKDQAAKAWL (207 aa)) are precorrin-2 dehydrogenase /sirohydrochlorin ferrochelatase. NAD(+)-binding positions include 22-23 (EV) and 43-44 (PR). Ser-132 is modified (phosphoserine). Residues 221–472 (GEVYLVGAGP…QPEGNLPGAE (252 aa)) are uroporphyrinogen-III C-methyltransferase. Pro-230 contacts S-adenosyl-L-methionine. Asp-253 serves as the catalytic Proton acceptor. The active-site Proton donor is Lys-275. Residues 306-308 (GGD), Ile-311, 336-337 (TA), Met-388, and Gly-417 each bind S-adenosyl-L-methionine.

It in the N-terminal section; belongs to the precorrin-2 dehydrogenase / sirohydrochlorin ferrochelatase family. This sequence in the C-terminal section; belongs to the precorrin methyltransferase family.

It carries out the reaction uroporphyrinogen III + 2 S-adenosyl-L-methionine = precorrin-2 + 2 S-adenosyl-L-homocysteine + H(+). It catalyses the reaction precorrin-2 + NAD(+) = sirohydrochlorin + NADH + 2 H(+). The catalysed reaction is siroheme + 2 H(+) = sirohydrochlorin + Fe(2+). It functions in the pathway cofactor biosynthesis; adenosylcobalamin biosynthesis; precorrin-2 from uroporphyrinogen III: step 1/1. It participates in cofactor biosynthesis; adenosylcobalamin biosynthesis; sirohydrochlorin from precorrin-2: step 1/1. The protein operates within porphyrin-containing compound metabolism; siroheme biosynthesis; precorrin-2 from uroporphyrinogen III: step 1/1. Its pathway is porphyrin-containing compound metabolism; siroheme biosynthesis; siroheme from sirohydrochlorin: step 1/1. It functions in the pathway porphyrin-containing compound metabolism; siroheme biosynthesis; sirohydrochlorin from precorrin-2: step 1/1. Its function is as follows. Multifunctional enzyme that catalyzes the SAM-dependent methylations of uroporphyrinogen III at position C-2 and C-7 to form precorrin-2 via precorrin-1. Then it catalyzes the NAD-dependent ring dehydrogenation of precorrin-2 to yield sirohydrochlorin. Finally, it catalyzes the ferrochelation of sirohydrochlorin to yield siroheme. In Nitrosospira multiformis (strain ATCC 25196 / NCIMB 11849 / C 71), this protein is Siroheme synthase.